The chain runs to 315 residues: 4-hydroxy-3-methylbut-2-enyl diphosphate reductase (315 aa).

Cys-12 is a binding site for [4Fe-4S] cluster. Positions 41 and 74 each coordinate (2E)-4-hydroxy-3-methylbut-2-enyl diphosphate. Dimethylallyl diphosphate-binding residues include His-41 and His-74. Isopentenyl diphosphate-binding residues include His-41 and His-74. Residue Cys-96 coordinates [4Fe-4S] cluster. His-124 serves as a coordination point for (2E)-4-hydroxy-3-methylbut-2-enyl diphosphate. Dimethylallyl diphosphate is bound at residue His-124. His-124 provides a ligand contact to isopentenyl diphosphate. Residue Glu-126 is the Proton donor of the active site. Thr-168 contacts (2E)-4-hydroxy-3-methylbut-2-enyl diphosphate. Cys-198 contributes to the [4Fe-4S] cluster binding site. Residues Ser-226, Ser-227, Asn-228, and Ser-270 each contribute to the (2E)-4-hydroxy-3-methylbut-2-enyl diphosphate site. Dimethylallyl diphosphate-binding residues include Ser-226, Ser-227, Asn-228, and Ser-270. Ser-226, Ser-227, Asn-228, and Ser-270 together coordinate isopentenyl diphosphate.

The protein belongs to the IspH family. [4Fe-4S] cluster is required as a cofactor.

The catalysed reaction is isopentenyl diphosphate + 2 oxidized [2Fe-2S]-[ferredoxin] + H2O = (2E)-4-hydroxy-3-methylbut-2-enyl diphosphate + 2 reduced [2Fe-2S]-[ferredoxin] + 2 H(+). The enzyme catalyses dimethylallyl diphosphate + 2 oxidized [2Fe-2S]-[ferredoxin] + H2O = (2E)-4-hydroxy-3-methylbut-2-enyl diphosphate + 2 reduced [2Fe-2S]-[ferredoxin] + 2 H(+). Its pathway is isoprenoid biosynthesis; dimethylallyl diphosphate biosynthesis; dimethylallyl diphosphate from (2E)-4-hydroxy-3-methylbutenyl diphosphate: step 1/1. It functions in the pathway isoprenoid biosynthesis; isopentenyl diphosphate biosynthesis via DXP pathway; isopentenyl diphosphate from 1-deoxy-D-xylulose 5-phosphate: step 6/6. Catalyzes the conversion of 1-hydroxy-2-methyl-2-(E)-butenyl 4-diphosphate (HMBPP) into a mixture of isopentenyl diphosphate (IPP) and dimethylallyl diphosphate (DMAPP). Acts in the terminal step of the DOXP/MEP pathway for isoprenoid precursor biosynthesis. This Pseudomonas fluorescens (strain ATCC BAA-477 / NRRL B-23932 / Pf-5) protein is 4-hydroxy-3-methylbut-2-enyl diphosphate reductase.